We begin with the raw amino-acid sequence, 425 residues long: MFYKEENFKKTEIGEIPEDWEIVELKDVCKKIKAGGTPKTSVEEYYKNGTIPFVKIEDITNSNKYLTNTKIKITEEGLNNSNAWIVPKNSVLFAMYGSIGETAINKIEVATNQAILGIIPKDNILESEFLYYILAKNKNYYSKLGMQTTQKNLNAQIVKSFKIPLPPLEEQKQIAKILTKIDEGIEIIEKSINKLERIKKGLMHKLLTKGIGHSRFKKSEIGEIPEDWEVFEIKDIFEVKTGTTPSTKKSEYWENGEINWITPLDLSRLNEKIYIGSSERKVTKIALEKCNLNLIPKGSIIISTRAPVGYVAVLTVESTFNQGCKGLFQKNNDSVNTEFYAYYLKFKKNLLENLSGGSTFKELSKSMLENFKIPLPPLEEQKQIAKILSSVDKSIELKKQKKEKLQRMKKKIMELLLTGKVRVKT.

The tract at residues 9–168 (KKTEIGEIPE…KSFKIPLPPL (160 aa)) is target recognition domain 1. A central conserved region (CCR) region spans residues 169–208 (EEQKQIAKILTKIDEGIEIIEKSINKLERIKKGLMHKLLT). The stretch at 169–208 (EEQKQIAKILTKIDEGIEIIEKSINKLERIKKGLMHKLLT) forms a coiled coil. A target recognition domain 2 region spans residues 209-368 (KGIGHSRFKK…TFKELSKSML (160 aa)). Residues 369–418 (ENFKIPLPPLEEQKQIAKILSSVDKSIELKKQKKEKLQRMKKKIMELLLT) are a coiled coil. Positions 369-418 (ENFKIPLPPLEEQKQIAKILSSVDKSIELKKQKKEKLQRMKKKIMELLLT) are distal conserved region (DCR).

Belongs to the type-I restriction system S methylase family. As to quaternary structure, the type I restriction/modification system is composed of three polypeptides R, M and S.

In terms of biological role, the specificity (S) subunit of a type I restriction enzyme; this subunit dictates DNA sequence specificity. The M and S subunits together form a methyltransferase (MTase) that methylates A-3 on the top and bottom strands of the sequence 5'-CAAN(7)TGG-3'. In the presence of the R subunit the complex can also act as an endonuclease, binding to the same target sequence but cutting the DNA some distance from this site. Whether the DNA is cut or modified depends on the methylation state of the target sequence. When the target site is unmodified, the DNA is cut. When the target site is hemimethylated, the complex acts as a maintenance MTase modifying the DNA so that both strands become methylated. After locating a non-methylated recognition site, the enzyme complex serves as a molecular motor that translocates DNA in an ATP-dependent manner until a collision occurs that triggers cleavage. This chain is Type I restriction enzyme MjaVII specificity subunit, found in Methanocaldococcus jannaschii (strain ATCC 43067 / DSM 2661 / JAL-1 / JCM 10045 / NBRC 100440) (Methanococcus jannaschii).